The following is a 601-amino-acid chain: Probable cytochrome P450 525A1 (601 aa).

The chain crosses the membrane as a helical span at residues I12–I32. The segment at N205–N253 is disordered. C544 provides a ligand contact to heme.

It belongs to the cytochrome P450 family. The cofactor is heme.

Its subcellular location is the membrane. This is Probable cytochrome P450 525A1 (cyp525A1) from Dictyostelium discoideum (Social amoeba).